The primary structure comprises 529 residues: MTDLHPVRRALLSVSDKTGLIELGKSLAERGVELLSTGGTAKALRDAGLTVKDVSEVTGFPEMMDGRVKTLHPMVHGGLLALRDNDAHVAAMTDHGIGEIDLLVVNLYPFEAALKRGAAYDEMIENIDIGGPAMIRAAAKNHAFVNVVVDVEDYGVLLEELDQNDGQTSFAFRQWLAQNAYARTAAYDAAVSNWMAGAIGLDAPRRRAFAGQIAQTLRYGENPHQDAAFYTDGTERVGVATAEQLQGKELSYNNINDTDAAFELVSEFAPEDGPAVAIIKHANPCGVARGATLLEAYNKAFDCDRTSAFGGIVALNMPLDAETAEAITQIFTEVVIAPGASDEAKAIFAAKKNLRLLITEGLPNPQDAGLTTRQVSGGMLVQDKDVGHRAMDDLKVVTEKAPTEEQMADLLFAWKVAKHVKSNAIVYVKDGQTVGVGAGQMSRVDSATIAGVKAQRMADAMELPESLAKGSAVASDAFFPFADGLMEAASNGATCVIQPGGSMRDDEVIKAANDAGLAMVFTGMRHFRH.

Positions 2-149 constitute an MGS-like domain; the sequence is TDLHPVRRAL…KNHAFVNVVV (148 aa).

It belongs to the PurH family.

It carries out the reaction (6R)-10-formyltetrahydrofolate + 5-amino-1-(5-phospho-beta-D-ribosyl)imidazole-4-carboxamide = 5-formamido-1-(5-phospho-D-ribosyl)imidazole-4-carboxamide + (6S)-5,6,7,8-tetrahydrofolate. It catalyses the reaction IMP + H2O = 5-formamido-1-(5-phospho-D-ribosyl)imidazole-4-carboxamide. Its pathway is purine metabolism; IMP biosynthesis via de novo pathway; 5-formamido-1-(5-phospho-D-ribosyl)imidazole-4-carboxamide from 5-amino-1-(5-phospho-D-ribosyl)imidazole-4-carboxamide (10-formyl THF route): step 1/1. It functions in the pathway purine metabolism; IMP biosynthesis via de novo pathway; IMP from 5-formamido-1-(5-phospho-D-ribosyl)imidazole-4-carboxamide: step 1/1. The polypeptide is Bifunctional purine biosynthesis protein PurH (Ruegeria sp. (strain TM1040) (Silicibacter sp.)).